The following is a 360-amino-acid chain: Phospho-N-acetylmuramoyl-pentapeptide-transferase (360 aa).

The next 10 membrane-spanning stretches (helical) occupy residues 27–47 (ILGVLTALAISLLVGNKVIVL), 73–93 (TMGGALIIFSISVSTLLWGDL), 97–117 (YVWVVLLVMLAFGVVGWVDDY), 145–165 (AFYLYYTASTPAETALIVPLF), 168–188 (VAIPLGMFFIVLTYFVIVGTS), 199–219 (GLAILPTVLVGGALGVFAYLT), 236–256 (SGELLVFCAALAGAGLGFLWF), 263–283 (IFMGDVGSLALGAALGTIAVI), 288–308 (LVLFIMGGVFVMETVSVILQV), and 337–357 (KVIVRFWIITVCLVLVGFATL).

This sequence belongs to the glycosyltransferase 4 family. MraY subfamily. Mg(2+) is required as a cofactor.

The protein resides in the cell inner membrane. The enzyme catalyses UDP-N-acetyl-alpha-D-muramoyl-L-alanyl-gamma-D-glutamyl-meso-2,6-diaminopimeloyl-D-alanyl-D-alanine + di-trans,octa-cis-undecaprenyl phosphate = di-trans,octa-cis-undecaprenyl diphospho-N-acetyl-alpha-D-muramoyl-L-alanyl-D-glutamyl-meso-2,6-diaminopimeloyl-D-alanyl-D-alanine + UMP. It participates in cell wall biogenesis; peptidoglycan biosynthesis. Functionally, catalyzes the initial step of the lipid cycle reactions in the biosynthesis of the cell wall peptidoglycan: transfers peptidoglycan precursor phospho-MurNAc-pentapeptide from UDP-MurNAc-pentapeptide onto the lipid carrier undecaprenyl phosphate, yielding undecaprenyl-pyrophosphoryl-MurNAc-pentapeptide, known as lipid I. The sequence is that of Phospho-N-acetylmuramoyl-pentapeptide-transferase from Marinomonas sp. (strain MWYL1).